The chain runs to 299 residues: Glutamyl-Q tRNA(Asp) synthetase (299 aa).

L-glutamate-binding positions include 9–13 (RFAPS) and E45. The 'HIGH' region motif lies at 12 to 22 (PSPTGPLHFGS). 3 residues coordinate Zn(2+): C101, C103, and C118. The L-glutamate site is built by Y170 and R188. A 'KMSKS' region motif is present at residues 226-230 (KLSKS). K229 contributes to the ATP binding site.

It belongs to the class-I aminoacyl-tRNA synthetase family. GluQ subfamily. It depends on Zn(2+) as a cofactor.

Catalyzes the tRNA-independent activation of glutamate in presence of ATP and the subsequent transfer of glutamate onto a tRNA(Asp). Glutamate is transferred on the 2-amino-5-(4,5-dihydroxy-2-cyclopenten-1-yl) moiety of the queuosine in the wobble position of the QUC anticodon. In Xanthomonas axonopodis pv. citri (strain 306), this protein is Glutamyl-Q tRNA(Asp) synthetase.